The primary structure comprises 341 residues: CRISPR-associated endonuclease Cas1 (341 aa).

Mn(2+)-binding residues include Glu173, His242, and Glu257.

Belongs to the CRISPR-associated endonuclease Cas1 family. As to quaternary structure, homodimer, forms a heterotetramer with a Cas2 homodimer. Requires Mg(2+) as cofactor. Mn(2+) serves as cofactor.

CRISPR (clustered regularly interspaced short palindromic repeat), is an adaptive immune system that provides protection against mobile genetic elements (viruses, transposable elements and conjugative plasmids). CRISPR clusters contain spacers, sequences complementary to antecedent mobile elements, and target invading nucleic acids. CRISPR clusters are transcribed and processed into CRISPR RNA (crRNA). Acts as a dsDNA endonuclease. Involved in the integration of spacer DNA into the CRISPR cassette. The protein is CRISPR-associated endonuclease Cas1 of Korarchaeum cryptofilum (strain OPF8).